A 567-amino-acid chain; its full sequence is Potassium-transporting ATPase potassium-binding subunit (567 aa).

The next 12 helical transmembrane spans lie at 3 to 23, 64 to 84, 136 to 156, 179 to 199, 220 to 240, 254 to 274, 285 to 305, 330 to 350, 374 to 394, 420 to 440, 488 to 508, and 527 to 547; these read MIGW…TKPL, LTYT…IYGV, GLTH…MALI, LYVL…QGIP, VGPV…GGFF, LSNF…TNVF, WAIL…TYWA, FGLV…CGAV, IIVG…VLAI, AMLA…VGVV, LASA…AIAG, and GGLF…LTFF.

The protein belongs to the KdpA family. As to quaternary structure, the system is composed of three essential subunits: KdpA, KdpB and KdpC.

It is found in the cell inner membrane. Functionally, part of the high-affinity ATP-driven potassium transport (or Kdp) system, which catalyzes the hydrolysis of ATP coupled with the electrogenic transport of potassium into the cytoplasm. This subunit binds the periplasmic potassium ions and delivers the ions to the membrane domain of KdpB through an intramembrane tunnel. The polypeptide is Potassium-transporting ATPase potassium-binding subunit (Bradyrhizobium diazoefficiens (strain JCM 10833 / BCRC 13528 / IAM 13628 / NBRC 14792 / USDA 110)).